The primary structure comprises 279 residues: Sulfur carrier protein FdhD (279 aa).

Cys-122 serves as the catalytic Cysteine persulfide intermediate.

Belongs to the FdhD family.

The protein localises to the cytoplasm. Its function is as follows. Required for formate dehydrogenase (FDH) activity. Acts as a sulfur carrier protein that transfers sulfur from IscS to the molybdenum cofactor prior to its insertion into FDH. This Thermoplasma volcanium (strain ATCC 51530 / DSM 4299 / JCM 9571 / NBRC 15438 / GSS1) protein is Sulfur carrier protein FdhD.